We begin with the raw amino-acid sequence, 411 residues long: Serine--tRNA ligase (411 aa).

Position 226–228 (226–228 (TSE)) interacts with L-serine. 257–259 (RKE) contacts ATP. Residue Glu-280 coordinates L-serine. Position 344–347 (344–347 (EISS)) interacts with ATP. Ser-379 serves as a coordination point for L-serine.

The protein belongs to the class-II aminoacyl-tRNA synthetase family. Type-1 seryl-tRNA synthetase subfamily. In terms of assembly, homodimer. The tRNA molecule binds across the dimer.

It is found in the cytoplasm. It carries out the reaction tRNA(Ser) + L-serine + ATP = L-seryl-tRNA(Ser) + AMP + diphosphate + H(+). The catalysed reaction is tRNA(Sec) + L-serine + ATP = L-seryl-tRNA(Sec) + AMP + diphosphate + H(+). The protein operates within aminoacyl-tRNA biosynthesis; selenocysteinyl-tRNA(Sec) biosynthesis; L-seryl-tRNA(Sec) from L-serine and tRNA(Sec): step 1/1. Catalyzes the attachment of serine to tRNA(Ser). Is also able to aminoacylate tRNA(Sec) with serine, to form the misacylated tRNA L-seryl-tRNA(Sec), which will be further converted into selenocysteinyl-tRNA(Sec). This Campylobacter jejuni subsp. jejuni serotype O:6 (strain 81116 / NCTC 11828) protein is Serine--tRNA ligase.